The following is a 356-amino-acid chain: Naringenin,2-oxoglutarate 3-dioxygenase (356 aa).

One can recognise a Fe2OG dioxygenase domain in the interval 188 to 292 (CVDMDQKVVV…RLSIATFQNP (105 aa)). Fe cation contacts are provided by H215, D217, and H273. R283 contacts 2-oxoglutarate.

This sequence belongs to the iron/ascorbate-dependent oxidoreductase family. It depends on Fe(2+) as a cofactor. L-ascorbate serves as cofactor.

It carries out the reaction a (2S)-flavan-4-one + 2-oxoglutarate + O2 = a (2R,3R)-dihydroflavonol + succinate + CO2. It functions in the pathway secondary metabolite biosynthesis; flavonoid biosynthesis. In terms of biological role, catalyzes the 3-beta-hydroxylation of 2S-flavanones to 2R,3R-dihydroflavonols which are intermediates in the biosynthesis of flavonols, anthocyanidins, catechins and proanthocyanidins in plants. The chain is Naringenin,2-oxoglutarate 3-dioxygenase (FHT) from Callistephus chinensis (China aster).